Reading from the N-terminus, the 3726-residue chain is Histone-lysine N-methyltransferase trithorax (3726 aa).

4 disordered regions span residues 1–247 (MGRS…ATTS), 321–352 (QLNSPVVDNPSPSPPIASGSTPSVEGGIGVGG), 371–429 (NEVA…TAKQ), and 509–624 (AGAS…RSTR). Composition is skewed to low complexity over residues 31–53 (PAEPQQPAPESQQPSGSGSGSSA) and 71–101 (GGASISGNTASSSAGSGNSGNGSSSGSSTGS). Residues 102-115 (GSSGSGSTNGGSVN) show a composition bias toward gly residues. A compositionally biased stretch (basic and acidic residues) spans 126–143 (LDKEAVTKDQNGDGDKTR). Positions 147-205 (SSAPSGKLSAAASGKALSKSSRTFSASTSVTSSGRSSGSSPDGNSGASSDGASSGISCG) are enriched in low complexity. A compositionally biased stretch (polar residues) spans 206–215 (KSTAKSTEAS). Residues 222–247 (TTGAGTCSSAKSSKASSGTTSEATTS) are compositionally biased toward low complexity. 2 stretches are compositionally biased toward low complexity: residues 384-402 (AAANGAASGKGSASNGPPA) and 509-525 (AGASSSSSNQESGSSSN). Residues 553 to 586 (PEDQNNAEDDEMDDDDDDEEAEEDDENEDDNDEA) show a composition bias toward acidic residues. The segment covering 587–610 (VSEKSAETEKSAGADERDPDEKQL) has biased composition (basic and acidic residues). A DNA-binding region (nuclear receptor) is located at residues 759-884 (PSACSICSAV…PGMRGEAAAR (126 aa)). Disordered stretches follow at residues 915-937 (TSVKWKSSGDSTSALTSIKPNPL), 981-1049 (LTKK…SHGV), 1115-1184 (VPSA…SSAK), and 1208-1231 (DIATSSSVTQSSNQTQGRKTKEHR). Polar residues predominate over residues 918–937 (KWKSSGDSTSALTSIKPNPL). The span at 986–1000 (SKQEKEKVKESEQSE) shows a compositional bias: basic and acidic residues. Residues 1031–1041 (PQTSTTTQPSA) are compositionally biased toward low complexity. Basic and acidic residues predominate over residues 1123–1132 (SPEKPTHIVT). Low complexity-rich tracts occupy residues 1173 to 1183 (GTASAAGGSSA) and 1211 to 1223 (TSSSVTQSSNQTQ). 3 PHD-type zinc fingers span residues 1266–1347 (RALC…CTVC), 1348–1393 (YTCN…CLKC), and 1421–1482 (GNFC…CARR). One can recognise a Bromo domain in the interval 1496-1663 (AVMEEFKASL…SEQFPWFQNE (168 aa)). The tract at residues 1573–1592 (FKDQQQQQQQRNANMNKPRV) is disordered. The C2HC pre-PHD-type zinc-finger motif lies at 1734–1774 (TRMCLFCRKSGEGLSGEEARLLYCGHDCWVHTNCAMWSAEV). A PHD-type 4 zinc finger spans residues 1795 to 1842 (IKCTVCGNRGATVGCNVRSCGEHYHYPCARSIDCAFLTDKSMYCPAHA). Residues 1884-1941 (RVQFHIGSLEVRQLGAIVPRFSDSYEAVVPINFLCSRLYWSSKEPWKIVEYTVRTTIQ) form the FYR N-terminal domain. 7 disordered regions span residues 1991-2019 (GGTDWSGEFPNPNSCVPPDENTEEEPQQQ), 2068-2110 (TQAM…WPAS), 2283-2302 (CSPTMSSNETESDVSGQGMT), 2649-2669 (GGGADGNQPGSNQQPLILGGT), 2866-2894 (SNLKQSQVKGKAASGTGTTCGAPPSIASK), 3029-3096 (QHFS…PTPP), and 3347-3381 (RKEEQRTVSQEQEQSKAAIVPTAAAPEPPQPIQEP). Residues 2074 to 2087 (NQAQNQNQQAGGAN) show a composition bias toward low complexity. A compositionally biased stretch (low complexity) spans 3032 to 3043 (STSSSSSSSNCS). Residues 3044–3057 (LPTNVVNPMQQQAP) show a composition bias toward polar residues. Residues 3386–3470 (GPHLLYEIQS…EKCSKYTPKY (85 aa)) form the FYR C-terminal domain. The region spanning 3588–3704 (DYVGVFRSHI…QGEELTYDYK (117 aa)) is the SET domain. Histidine 3598 and arginine 3600 together coordinate S-adenosyl-L-methionine. Cysteine 3641 is subject to S-methylcysteine; by autocatalysis. S-adenosyl-L-methionine-binding positions include tyrosine 3642 and 3665–3666 (NH). Positions 3668, 3714, 3716, and 3721 each coordinate Zn(2+). The Post-SET domain maps to 3710–3726 (EKIPCSCGSKRCRKYLN).

It belongs to the class V-like SAM-binding methyltransferase superfamily. Histone-lysine methyltransferase family. TRX/MLL subfamily. As to quaternary structure, interacts (via SET domain) with ash1 (via SET domain). Interacts with Nup98. Maternal isoforms are expressed in syncytial blastoderm, confined to the ventral region fated to become mesoderm. An additional broad domain of expression arises during cellularization and is quickly resolved into four pair-rule-like stripes in the posterior half of the embryo.

The protein localises to the nucleus. Its subcellular location is the chromosome. It carries out the reaction L-lysyl(9)-[histone H3] + 3 S-adenosyl-L-methionine = N(6),N(6),N(6)-trimethyl-L-lysyl(9)-[histone H3] + 3 S-adenosyl-L-homocysteine + 3 H(+). The catalysed reaction is L-cysteinyl-[protein] + S-adenosyl-L-methionine = S-methyl-L-cysteinyl-[protein] + S-adenosyl-L-homocysteine + H(+). Histone methyltransferase that methylates 'Lys-4' of histone H3 (H3K4me). H3K4me represents a specific tag for epigenetic transcriptional activation. Functions in segment determination through interaction with genes of bithorax (BX-C) and antennapedia (ANT-C) complexes. Acts as an activator of BX-C. Involved in the very early regulation of homeotic genes expressed only in the posterior region of the embryo. Also has auto-methylation activity on Cys-3641. This chain is Histone-lysine N-methyltransferase trithorax, found in Drosophila melanogaster (Fruit fly).